The sequence spans 777 residues: Ribosome-releasing factor 2, mitochondrial (777 aa).

The 286-residue stretch at 68–353 folds into the tr-type G domain; that stretch reads AKIRNIGIMA…AITMYLPSPE (286 aa). Residues 77–84, 141–145, and 195–198 each bind GTP; these read AHIDAGKT, DTPGH, and NKMD.

The protein belongs to the TRAFAC class translation factor GTPase superfamily. Classic translation factor GTPase family. EF-G/EF-2 subfamily.

It is found in the mitochondrion. It carries out the reaction GTP + H2O = GDP + phosphate + H(+). In terms of biological role, mitochondrial GTPase that mediates the disassembly of ribosomes from messenger RNA at the termination of mitochondrial protein biosynthesis. Acts in collaboration with MRRF. GTP hydrolysis follows the ribosome disassembly and probably occurs on the ribosome large subunit. Not involved in the GTP-dependent ribosomal translocation step during translation elongation. The chain is Ribosome-releasing factor 2, mitochondrial from Bos taurus (Bovine).